A 413-amino-acid polypeptide reads, in one-letter code: Cardiolipin synthase B (413 aa).

PLD phosphodiesterase domains follow at residues 108 to 135 (VFRR…SSEH) and 285 to 312 (RRRP…DPLS). Active-site residues include histidine 113, lysine 115, aspartate 120, histidine 290, lysine 292, and aspartate 297. Residues 388–413 (TQVDPPAQPTMETQDRVETENTGVNP) are disordered.

It belongs to the phospholipase D family. Cardiolipin synthase subfamily. ClsB sub-subfamily.

Its subcellular location is the cell membrane. The enzyme catalyses 2 a 1,2-diacyl-sn-glycero-3-phospho-(1'-sn-glycerol) = a cardiolipin + glycerol. Its function is as follows. Catalyzes the phosphatidyl group transfer from one phosphatidylglycerol molecule to another to form cardiolipin (CL) (diphosphatidylglycerol) and glycerol. This Shigella flexneri protein is Cardiolipin synthase B.